A 576-amino-acid chain; its full sequence is Vesicular glutamate transporter 1 (576 aa).

The Cytoplasmic segment spans residues 1–63 (MEFRKEEFKK…CTCFGLPRRY (63 aa)). A helical transmembrane segment spans residues 64 to 84 (IIAIMSGLGFCISFGIRCNLG). The Vesicular portion of the chain corresponds to 85 to 116 (VAIVSMVNNNTVYKGNKLVIEQAQFNWDPETV). The N-linked (GlcNAc...) asparagine glycan is linked to Asn93. The chain crosses the membrane as a helical span at residues 117–137 (GMIHGSFFWGYIVTQIPGGYI). At 138–140 (CQK) the chain is on the cytoplasmic side. The helical transmembrane segment at 141-161 (FAANRVFGFAIVATSTLNMLI) threads the bilayer. The Vesicular segment spans residues 162–168 (PSAARVH). A helical membrane pass occupies residues 169-189 (FACVICVRILQGLVEGVTYPA). Over 190-208 (CHGIWSKWAPPLERSRLAT) the chain is Cytoplasmic. Residues 209–229 (TAFCGSYAGAVVAMPLAGVLV) traverse the membrane as a helical segment. Residues 230–236 (QYSGWSS) are Vesicular-facing. A helical membrane pass occupies residues 237-257 (VFYVYGSFGITWYMFWILVSY). At 258–297 (ESPAQHPTISEEERKYIEESIGESTGFMNPMAKFKAPWRK) the chain is on the cytoplasmic side. A helical membrane pass occupies residues 298 to 320 (FFTSMPVYAIIVANFCRSWTFYL). The Vesicular portion of the chain corresponds to 321 to 341 (LLISQPAYFEEVFGFAISKVG). Residues 342–362 (LLSALPHLVMTIIVPIGGQIA) form a helical membrane-spanning segment. Residues 363-378 (DFLRTKRIMSTTNVRK) are Cytoplasmic-facing. Residues 379–399 (MMNCGGFGMEATLLLVVGYSH) traverse the membrane as a helical segment. The Vesicular portion of the chain corresponds to 400-401 (SR). Residues 402-422 (GVAISFLVLAVGFSGFAISGF) form a helical membrane-spanning segment. Topologically, residues 423–435 (NVNHLDIAPRYAS) are cytoplasmic. A helical transmembrane segment spans residues 436–456 (ILMGISNGVGTLSGMVCPLIV). Residues 457–469 (GAMTKHKTREEWQ) are Vesicular-facing. Residues 470–490 (YVFLIASLVHYGGVVFYGIFA) form a helical membrane-spanning segment. At 491–576 (SGEKQPWAEP…YGTVAERDLS (86 aa)) the chain is on the cytoplasmic side. Residues 517–552 (ADESEEQTQAHGGYGSYGATQTTSQQNGGWATDWEK) form a disordered region. Residues 534–545 (GATQTTSQQNGG) show a composition bias toward polar residues.

Belongs to the major facilitator superfamily. Sodium/anion cotransporter family. VGLUT subfamily.

It localises to the cytoplasmic vesicle. The protein localises to the secretory vesicle. The protein resides in the synaptic vesicle membrane. Its subcellular location is the cell membrane. It is found in the synapse. It localises to the synaptosome. The catalysed reaction is L-glutamate(out) = L-glutamate(in). The enzyme catalyses chloride(in) = chloride(out). It carries out the reaction 3 Na(+)(out) + phosphate(out) = 3 Na(+)(in) + phosphate(in). It catalyses the reaction phosphate(in) = phosphate(out). The catalysed reaction is K(+)(in) + H(+)(out) = K(+)(out) + H(+)(in). Chloride channel activity is allosterically activated by lumenal H(+) and Cl(-) leading to synaptic vesicles acidification. The L-glutamate transport activity is allosterically activated by lumenal H(+) and Cl(-). The allosteric activation by H(+) efficiently prevents non-vesicular efflux across the plasma membrane, thereby restricting L-glutamate transport activity to acidic membranes such as synaptic vesicles. Functionally, multifunctional transporter that transports L-glutamate as well as multiple ions such as chloride, proton, potassium, sodium and phosphate. At the synaptic vesicle membrane, mainly functions as an uniporter which transports preferentially L-glutamate but also phosphate from the cytoplasm into synaptic vesicles at presynaptic nerve terminals of excitatory neural cells. The L-glutamate or phosphate uniporter activity is electrogenic and is driven by the proton electrochemical gradient, mainly by the electrical gradient established by the vacuolar H(+)-ATPase across the synaptic vesicle membrane. In addition, functions as a chloride channel that allows a chloride permeation through the synaptic vesicle membrane that affects the proton electrochemical gradient and promotes synaptic vesicles acidification. Moreover, may function as a K(+)/H(+) antiport allowing to maintain the electrical gradient and to decrease chemical gradient and therefore sustain vesicular glutamate uptake. The vesicular K(+)/H(+) antiport activity is electroneutral. At the plasma membrane, following exocytosis, functions as a symporter of Na(+) and phosphate from the extracellular space to the cytoplasm allowing synaptic phosphate homeostasis regulation. The symporter activity is driven by an inside negative membrane potential and is electrogenic. Is necessary for synaptic signaling of visual-evoked responses from photoreceptors. This is Vesicular glutamate transporter 1 from Xenopus laevis (African clawed frog).